An 85-amino-acid chain; its full sequence is Large ribosomal subunit protein bL27 (85 aa).

A disordered region spans residues 1–24; sequence MAHKKAGGSSRNGRDSHSKRLGVK.

The protein belongs to the bacterial ribosomal protein bL27 family.

This chain is Large ribosomal subunit protein bL27, found in Nitrosomonas eutropha (strain DSM 101675 / C91 / Nm57).